We begin with the raw amino-acid sequence, 420 residues long: Cyclin-B2-1 (420 aa).

Positions 1-61 (MDRASENRRL…EKSGKEEQKP (61 aa)) are disordered. A compositionally biased stretch (basic and acidic residues) spans 49 to 60 (PMLEKSGKEEQK).

The protein belongs to the cyclin family. Cyclin AB subfamily. As to quaternary structure, interacts with CDKB2-1. As to expression, expressed in the root apices.

In terms of biological role, involved in the control of the cell cycle at the G2/M (mitosis) transition. May activate CDKB2-1 kinase. The chain is Cyclin-B2-1 (CYCB2-1) from Oryza sativa subsp. japonica (Rice).